The chain runs to 397 residues: Xylose isomerase (397 aa).

Active-site residues include H54 and D57. 7 residues coordinate Mg(2+): E181, E217, H220, D245, D255, D257, and D293.

Belongs to the xylose isomerase family. As to quaternary structure, homotetramer. Mg(2+) is required as a cofactor.

Its subcellular location is the cytoplasm. The catalysed reaction is alpha-D-xylose = alpha-D-xylulofuranose. This Clavibacter sepedonicus (Clavibacter michiganensis subsp. sepedonicus) protein is Xylose isomerase.